A 227-amino-acid polypeptide reads, in one-letter code: Cytochrome c oxidase subunit 2 (227 aa).

At 1-26 (MATWSNLSLQDGASPLMEQLSFFHDH) the chain is on the mitochondrial intermembrane side. Residues 27–48 (TMIDLLLITMIVGYSLSYMLLT) traverse the membrane as a helical segment. The Mitochondrial matrix segment spans residues 49–62 (KYTNRNMLHGHLIE). Residues 63–82 (TIWTALPAITLIFIALPSLR) traverse the membrane as a helical segment. Over 83 to 227 (LLYLLDDSSD…LFIKWLSNMM (145 aa)) the chain is Mitochondrial intermembrane. H161, C196, E198, C200, H204, and M207 together coordinate Cu cation. E198 serves as a coordination point for Mg(2+).

The protein belongs to the cytochrome c oxidase subunit 2 family. In terms of assembly, component of the cytochrome c oxidase (complex IV, CIV), a multisubunit enzyme composed of a catalytic core of 3 subunits and several supernumerary subunits. The complex exists as a monomer or a dimer and forms supercomplexes (SCs) in the inner mitochondrial membrane with ubiquinol-cytochrome c oxidoreductase (cytochrome b-c1 complex, complex III, CIII). It depends on Cu cation as a cofactor.

It localises to the mitochondrion inner membrane. The catalysed reaction is 4 Fe(II)-[cytochrome c] + O2 + 8 H(+)(in) = 4 Fe(III)-[cytochrome c] + 2 H2O + 4 H(+)(out). Functionally, component of the cytochrome c oxidase, the last enzyme in the mitochondrial electron transport chain which drives oxidative phosphorylation. The respiratory chain contains 3 multisubunit complexes succinate dehydrogenase (complex II, CII), ubiquinol-cytochrome c oxidoreductase (cytochrome b-c1 complex, complex III, CIII) and cytochrome c oxidase (complex IV, CIV), that cooperate to transfer electrons derived from NADH and succinate to molecular oxygen, creating an electrochemical gradient over the inner membrane that drives transmembrane transport and the ATP synthase. Cytochrome c oxidase is the component of the respiratory chain that catalyzes the reduction of oxygen to water. Electrons originating from reduced cytochrome c in the intermembrane space (IMS) are transferred via the dinuclear copper A center (CU(A)) of subunit 2 and heme A of subunit 1 to the active site in subunit 1, a binuclear center (BNC) formed by heme A3 and copper B (CU(B)). The BNC reduces molecular oxygen to 2 water molecules using 4 electrons from cytochrome c in the IMS and 4 protons from the mitochondrial matrix. The protein is Cytochrome c oxidase subunit 2 (COII) of Locusta migratoria (Migratory locust).